The sequence spans 339 residues: Ornithine utilization regulator (339 aa).

Residues Thr241 to Ala338 form the HTH araC/xylS-type domain. 2 consecutive DNA-binding regions (H-T-H motif) follow at residues Glu258 to Gly279 and Leu305 to Thr328.

In terms of biological role, probably activates the ArgJ gene that encodes ornithine acetyltransferase. Binds to its own promoter-operator region. Probably binds ornithine. The polypeptide is Ornithine utilization regulator (oruR) (Pseudomonas aeruginosa (strain ATCC 15692 / DSM 22644 / CIP 104116 / JCM 14847 / LMG 12228 / 1C / PRS 101 / PAO1)).